A 213-amino-acid chain; its full sequence is Protein-L-isoaspartate O-methyltransferase (213 aa).

S64 is a catalytic residue.

This sequence belongs to the methyltransferase superfamily. L-isoaspartyl/D-aspartyl protein methyltransferase family.

Its subcellular location is the cytoplasm. It carries out the reaction [protein]-L-isoaspartate + S-adenosyl-L-methionine = [protein]-L-isoaspartate alpha-methyl ester + S-adenosyl-L-homocysteine. Catalyzes the methyl esterification of L-isoaspartyl residues in peptides and proteins that result from spontaneous decomposition of normal L-aspartyl and L-asparaginyl residues. It plays a role in the repair and/or degradation of damaged proteins. In Flavobacterium psychrophilum (strain ATCC 49511 / DSM 21280 / CIP 103535 / JIP02/86), this protein is Protein-L-isoaspartate O-methyltransferase.